A 1218-amino-acid chain; its full sequence is Coatomer subunit alpha-2 (1218 aa).

WD repeat units lie at residues 7–48 (TKSN…DRFD), 49–88 (EHEGPVRGVHFHNSQPLFVSGGDDYKIKVWNYKTHRCLFT), 91–132 (GHLD…SVLT), 133–172 (GHNHYVMCASFHPKEDLVVSASLDQTVRVWDIGALKKKSA), 202–241 (GHDRGVNWASFHPTLPLIVSGADDRQVKLWRMNETKAWEV), 246–285 (GHMNNVSSVMFHAKQDIIVSNSEDKSIRVWDATKRTGIQT), 288–326 (REHDRFWILAVHPEINLLAAGHDNGMIVFKLERERPAFA), and 363–404 (SLNQ…VGRS). The interval 826–849 (NRGAVDEEEEDVEGDWGEGLDKFD) is disordered. The segment covering 831–843 (DEEEEDVEGDWGE) has biased composition (acidic residues).

As to quaternary structure, oligomeric complex that consists of at least the alpha, beta, beta', gamma, delta, epsilon and zeta subunits.

The protein resides in the cytoplasm. It is found in the golgi apparatus membrane. It localises to the cytoplasmic vesicle. The protein localises to the COPI-coated vesicle membrane. Its function is as follows. The coatomer is a cytosolic protein complex that binds to dilysine motifs and reversibly associates with Golgi non-clathrin-coated vesicles, which further mediate biosynthetic protein transport from the ER, via the Golgi up to the trans Golgi network. Coatomer complex is required for budding from Golgi membranes, and is essential for the retrograde Golgi-to-ER transport of dilysine-tagged proteins. This chain is Coatomer subunit alpha-2, found in Arabidopsis thaliana (Mouse-ear cress).